The primary structure comprises 439 residues: Mitochondrial distribution and morphology protein 10 (439 aa).

Residues 275-305 (LPDATPPSFQVPSSSSSSSNPVSPSTSQPPT) form a disordered region. Over residues 280 to 305 (PPSFQVPSSSSSSSNPVSPSTSQPPT) the composition is skewed to low complexity.

It belongs to the MDM10 family. As to quaternary structure, component of the ER-mitochondria encounter structure (ERMES) or MDM complex, composed of MMM1, MDM10, MDM12 and MDM34. Associates with the mitochondrial outer membrane sorting assembly machinery SAM(core) complex.

It is found in the mitochondrion outer membrane. Functionally, component of the ERMES/MDM complex, which serves as a molecular tether to connect the endoplasmic reticulum and mitochondria. Components of this complex are involved in the control of mitochondrial shape and protein biogenesis and may function in phospholipid exchange. MDM10 is involved in the late assembly steps of the general translocase of the mitochondrial outer membrane (TOM complex). Functions in the TOM40-specific route of the assembly of outer membrane beta-barrel proteins, including the association of TOM40 with the receptor TOM22 and small TOM proteins. Can associate with the SAM(core) complex as well as the MDM12-MMM1 complex, both involved in late steps of the major beta-barrel assembly pathway, that is responsible for biogenesis of all outer membrane beta-barrel proteins. May act as a switch that shuttles between both complexes and channels precursor proteins into the TOM40-specific pathway. Plays a role in mitochondrial morphology and in the inheritance of mitochondria. This is Mitochondrial distribution and morphology protein 10 from Laccaria bicolor (strain S238N-H82 / ATCC MYA-4686) (Bicoloured deceiver).